The sequence spans 108 residues: Long neurotoxin 43 (108 aa).

An N-terminal signal peptide occupies residues 1–21 (MKTLLLTLVVVTIVCLDLAYT). 5 disulfides stabilise this stretch: C24-C42, C35-C63, C48-C52, C67-C78, and C79-C84.

This sequence belongs to the three-finger toxin family. Long-chain subfamily. Type II alpha-neurotoxin sub-subfamily. Expressed by the venom gland.

The protein localises to the secreted. Binds with high affinity to muscular (alpha-1/CHRNA1) and neuronal (alpha-7/CHRNA7) nicotinic acetylcholine receptor (nAChR) and inhibits acetylcholine from binding to the receptor, thereby impairing neuromuscular and neuronal transmission. The polypeptide is Long neurotoxin 43 (Drysdalia coronoides (White-lipped snake)).